Reading from the N-terminus, the 717-residue chain is Polyribonucleotide nucleotidyltransferase (717 aa).

Mg(2+) contacts are provided by Asp-486 and Asp-492. In terms of domain architecture, KH spans 553–612 (PKIIQLQIDIDKISLVIGSTGKTVKAITDEFEVRVQIEQDGRITLFGTDSLKMQKAKARI). An S1 motif domain is found at 622-715 (GEIYEGVVKK…KFGKIELELV (94 aa)). Residues 650–683 (SNRPKSRDDRYGDMRHSRYGSGRHSRYGRDSRNT) are disordered. Residues 654 to 665 (KSRDDRYGDMRH) are compositionally biased toward basic and acidic residues. Positions 666 to 675 (SRYGSGRHSR) are enriched in basic residues.

It belongs to the polyribonucleotide nucleotidyltransferase family. Mg(2+) serves as cofactor.

The protein localises to the cytoplasm. It catalyses the reaction RNA(n+1) + phosphate = RNA(n) + a ribonucleoside 5'-diphosphate. Its function is as follows. Involved in mRNA degradation. Catalyzes the phosphorolysis of single-stranded polyribonucleotides processively in the 3'- to 5'-direction. This is Polyribonucleotide nucleotidyltransferase from Borrelia turicatae (strain 91E135).